A 275-amino-acid chain; its full sequence is Glucan endo-1,3-beta-glucosidase, acidic isoform PR-N (275 aa).

The Nucleophile role is filled by E196.

It belongs to the glycosyl hydrolase 17 family. Post-translationally, the N-terminus is blocked.

It is found in the secreted. The protein resides in the extracellular space. The enzyme catalyses Hydrolysis of (1-&gt;3)-beta-D-glucosidic linkages in (1-&gt;3)-beta-D-glucans.. In terms of biological role, implicated in the defense of plants against pathogens. This Nicotiana tabacum (Common tobacco) protein is Glucan endo-1,3-beta-glucosidase, acidic isoform PR-N (PRN).